A 527-amino-acid polypeptide reads, in one-letter code: GMP synthase [glutamine-hydrolyzing] (527 aa).

Residues 4 to 202 (KILILDFGSQ…VLQICGARAD (199 aa)) enclose the Glutamine amidotransferase type-1 domain. Catalysis depends on cysteine 81, which acts as the Nucleophile. Active-site residues include histidine 176 and glutamate 178. Residues 203-395 (WEMGNYIDEA…LGLPPAMVYR (193 aa)) form the GMPS ATP-PPase domain. Residue 230 to 236 (SGGVDSS) participates in ATP binding.

In terms of assembly, homodimer.

It catalyses the reaction XMP + L-glutamine + ATP + H2O = GMP + L-glutamate + AMP + diphosphate + 2 H(+). Its pathway is purine metabolism; GMP biosynthesis; GMP from XMP (L-Gln route): step 1/1. Catalyzes the synthesis of GMP from XMP. This chain is GMP synthase [glutamine-hydrolyzing], found in Paraburkholderia phytofirmans (strain DSM 17436 / LMG 22146 / PsJN) (Burkholderia phytofirmans).